Reading from the N-terminus, the 264-residue chain is Thymidylate synthase (264 aa).

R21 serves as a coordination point for dUMP. (6R)-5,10-methylene-5,6,7,8-tetrahydrofolate is bound at residue H51. DUMP is bound at residue 126 to 127 (RR). The active-site Nucleophile is the C146. DUMP contacts are provided by residues 166–169 (RSCD), N177, and 207–209 (HLY). Position 169 (D169) interacts with (6R)-5,10-methylene-5,6,7,8-tetrahydrofolate. Residue A263 participates in (6R)-5,10-methylene-5,6,7,8-tetrahydrofolate binding.

The protein belongs to the thymidylate synthase family. Bacterial-type ThyA subfamily. Homodimer.

Its subcellular location is the cytoplasm. The catalysed reaction is dUMP + (6R)-5,10-methylene-5,6,7,8-tetrahydrofolate = 7,8-dihydrofolate + dTMP. The protein operates within pyrimidine metabolism; dTTP biosynthesis. In terms of biological role, catalyzes the reductive methylation of 2'-deoxyuridine-5'-monophosphate (dUMP) to 2'-deoxythymidine-5'-monophosphate (dTMP) while utilizing 5,10-methylenetetrahydrofolate (mTHF) as the methyl donor and reductant in the reaction, yielding dihydrofolate (DHF) as a by-product. This enzymatic reaction provides an intracellular de novo source of dTMP, an essential precursor for DNA biosynthesis. The chain is Thymidylate synthase from Salmonella typhimurium (strain LT2 / SGSC1412 / ATCC 700720).